Reading from the N-terminus, the 380-residue chain is Maintenance of mitochondrial morphology protein 1 (380 aa).

Residues 1–64 (MQGRAIWAEG…IVPSLSFIQG (64 aa)) are Lumenal-facing. Residues 65-85 (FMAGQAVLLMLFLGLFRYFFM) form a helical membrane-spanning segment. Over 86-380 (TSSPGTRAQQ…IGTSPADPLA (295 aa)) the chain is Cytoplasmic. In terms of domain architecture, SMP-LTD spans 147-369 (APESLDWLNV…WPHFWHIPLP (223 aa)).

The protein belongs to the MMM1 family. Homodimer. Component of the ER-mitochondria encounter structure (ERMES) or MDM complex, composed of MMM1, MDM10, MDM12 and MDM34. An MMM1 homodimer associates with one molecule of MDM12 on each side in a pairwise head-to-tail manner, and the SMP-LTD domains of MMM1 and MDM12 generate a continuous hydrophobic tunnel for phospholipid trafficking.

It localises to the endoplasmic reticulum membrane. Component of the ERMES/MDM complex, which serves as a molecular tether to connect the endoplasmic reticulum (ER) and mitochondria. Components of this complex are involved in the control of mitochondrial shape and protein biogenesis, and function in nonvesicular lipid trafficking between the ER and mitochondria. The MDM12-MMM1 subcomplex functions in the major beta-barrel assembly pathway that is responsible for biogenesis of all outer membrane beta-barrel proteins, and acts in a late step after the SAM complex. The MDM10-MDM12-MMM1 subcomplex further acts in the TOM40-specific pathway after the action of the MDM12-MMM1 complex. Essential for establishing and maintaining the structure of mitochondria and maintenance of mtDNA nucleoids. The polypeptide is Maintenance of mitochondrial morphology protein 1 (Malassezia globosa (strain ATCC MYA-4612 / CBS 7966) (Dandruff-associated fungus)).